Reading from the N-terminus, the 638-residue chain is Neuroendocrine convertase 2 (638 aa).

A signal peptide spans 1 to 25; sequence MRGGCISQGKAAAGLLFCVMVFASA. Residues 26-109 constitute a propeptide that is removed on maturation; that stretch reads ERPVFTNHFL…QQEGFNRKKR (84 aa). The Peptidase S8 domain occupies 129 to 453; the sequence is QWYLINTGQA…YGVLDAGAMV (325 aa). Residues D167 and H208 each act as charge relay system in the active site. 2 cysteine pairs are disulfide-bonded: C225-C376 and C317-C347. An N-linked (GlcNAc...) asparagine glycan is attached at N375. S384 serves as the catalytic Charge relay system. The P/Homo B domain occupies 461–597; it reads TVPERFHCVG…TLMLHGTQSA (137 aa). The cysteines at positions 468 and 494 are disulfide-linked. N-linked (GlcNAc...) asparagine glycosylation is found at N514 and N524.

The protein belongs to the peptidase S8 family. Furin subfamily.

The protein localises to the cytoplasmic vesicle. It localises to the secretory vesicle. The protein resides in the secreted. The enzyme catalyses Release of protein hormones and neuropeptides from their precursors, generally by hydrolysis of -Lys-Arg-|- bonds.. Functionally, serine endopeptidase which is involved in the processing of hormone and other protein precursors at sites comprised of pairs of basic amino acid residues. Responsible for the release of glucagon from proglucagon in pancreatic A cells. The polypeptide is Neuroendocrine convertase 2 (PCSK2) (Bos taurus (Bovine)).